Here is a 125-residue protein sequence, read N- to C-terminus: Large ribosomal subunit protein bL12 (125 aa).

This sequence belongs to the bacterial ribosomal protein bL12 family. In terms of assembly, homodimer. Part of the ribosomal stalk of the 50S ribosomal subunit. Forms a multimeric L10(L12)X complex, where L10 forms an elongated spine to which 2 to 4 L12 dimers bind in a sequential fashion. Binds GTP-bound translation factors.

Forms part of the ribosomal stalk which helps the ribosome interact with GTP-bound translation factors. Is thus essential for accurate translation. The protein is Large ribosomal subunit protein bL12 of Dictyoglomus thermophilum (strain ATCC 35947 / DSM 3960 / H-6-12).